A 636-amino-acid chain; its full sequence is Molybdenum cofactor biosynthesis protein 1 (636 aa).

The interval 1-383 (MAARPAFGIV…QMKNRPMILI (383 aa)) is molybdenum cofactor biosynthesis protein A. Positions 19-40 (RGCSSGAPVTQPRPGEPSRPTR) are disordered. Ser64 carries the phosphoserine modification. The Radical SAM core domain occupies 64 to 279 (SFGRQHSYLR…TIRQRWPGLE (216 aa)). Arg73 is a GTP binding site. 2 residues coordinate [4Fe-4S] cluster: Cys80 and Cys84. Tyr86 contributes to the S-adenosyl-L-methionine binding site. Cys87 contributes to the [4Fe-4S] cluster binding site. Position 123 (Arg123) interacts with GTP. Position 127 (Gly127) interacts with S-adenosyl-L-methionine. Residue Thr154 participates in GTP binding. Ser178 serves as a coordination point for S-adenosyl-L-methionine. Position 198 is an N6-acetyllysine (Lys198). Lys215 contacts GTP. Residue Met249 coordinates S-adenosyl-L-methionine. Cys312 and Cys315 together coordinate [4Fe-4S] cluster. Residue 317–319 (RLR) coordinates GTP. Cys329 contributes to the [4Fe-4S] cluster binding site. The interval 414-636 (QCLSDQMASL…GGQRGDFHRA (223 aa)) is molybdenum cofactor biosynthesis protein C. Residues 444–484 (SPQRHYSSYPDPDTHSKCLSTGSQAPDAPSGPGPTSNQLTH) are disordered. N6-acetyllysine is present on Lys528. Asp606 acts as the For molybdenum cofactor biosynthesis protein C activity in catalysis.

It in the C-terminal section; belongs to the MoaC family. The protein in the N-terminal section; belongs to the radical SAM superfamily. MoaA family. In terms of assembly, isoform Mocs1a and isoform Mocs1b probably form a heterooligomer. It depends on [4Fe-4S] cluster as a cofactor.

The enzyme catalyses GTP + AH2 + S-adenosyl-L-methionine = (8S)-3',8-cyclo-7,8-dihydroguanosine 5'-triphosphate + 5'-deoxyadenosine + L-methionine + A + H(+). It carries out the reaction (8S)-3',8-cyclo-7,8-dihydroguanosine 5'-triphosphate = cyclic pyranopterin phosphate + diphosphate. Its pathway is cofactor biosynthesis; molybdopterin biosynthesis. In terms of biological role, isoform Mocs1a and isoform Mocs1b probably form a complex that catalyzes the conversion of 5'-GTP to cyclic pyranopterin monophosphate (cPMP). Mocs1a catalyzes the cyclization of GTP to (8S)-3',8-cyclo-7,8-dihydroguanosine 5'-triphosphate and Mocs1b catalyzes the subsequent conversion of (8S)-3',8-cyclo-7,8-dihydroguanosine 5'-triphosphate to cPMP. This is Molybdenum cofactor biosynthesis protein 1 (Mocs1) from Mus musculus (Mouse).